The chain runs to 141 residues: Large ribosomal subunit protein uL11c (141 aa).

The protein belongs to the universal ribosomal protein uL11 family. Part of the ribosomal stalk of the 50S ribosomal subunit. Interacts with L10 and the large rRNA to form the base of the stalk. L10 forms an elongated spine to which L12 dimers bind in a sequential fashion forming a multimeric L10(L12)X complex.

It localises to the plastid. The protein localises to the chloroplast. Its function is as follows. Forms part of the ribosomal stalk which helps the ribosome interact with GTP-bound translation factors. The protein is Large ribosomal subunit protein uL11c of Pyropia yezoensis (Susabi-nori).